The sequence spans 415 residues: Histidine--tRNA ligase (415 aa).

It belongs to the class-II aminoacyl-tRNA synthetase family. Homodimer.

The protein localises to the cytoplasm. The catalysed reaction is tRNA(His) + L-histidine + ATP = L-histidyl-tRNA(His) + AMP + diphosphate + H(+). The sequence is that of Histidine--tRNA ligase from Clostridium botulinum (strain Okra / Type B1).